A 697-amino-acid chain; its full sequence is tRNA 5-methylaminomethyl-2-thiouridine biosynthesis bifunctional protein MnmC (697 aa).

The tRNA (mnm(5)s(2)U34)-methyltransferase stretch occupies residues 1–272 (MPKPASMAMN…KREMLTAVMS (272 aa)). Positions 300-697 (IGAGVAGLLT…HKHKTRQAVI (398 aa)) are FAD-dependent cmnm(5)s(2)U34 oxidoreductase.

The protein in the N-terminal section; belongs to the methyltransferase superfamily. tRNA (mnm(5)s(2)U34)-methyltransferase family. This sequence in the C-terminal section; belongs to the DAO family. The cofactor is FAD.

The protein resides in the cytoplasm. The enzyme catalyses 5-aminomethyl-2-thiouridine(34) in tRNA + S-adenosyl-L-methionine = 5-methylaminomethyl-2-thiouridine(34) in tRNA + S-adenosyl-L-homocysteine + H(+). Its function is as follows. Catalyzes the last two steps in the biosynthesis of 5-methylaminomethyl-2-thiouridine (mnm(5)s(2)U) at the wobble position (U34) in tRNA. Catalyzes the FAD-dependent demodification of cmnm(5)s(2)U34 to nm(5)s(2)U34, followed by the transfer of a methyl group from S-adenosyl-L-methionine to nm(5)s(2)U34, to form mnm(5)s(2)U34. This Psychrobacter cryohalolentis (strain ATCC BAA-1226 / DSM 17306 / VKM B-2378 / K5) protein is tRNA 5-methylaminomethyl-2-thiouridine biosynthesis bifunctional protein MnmC.